The sequence spans 435 residues: GTPase Der (435 aa).

EngA-type G domains lie at 8–169 (NLVA…NFEN) and 176–351 (FKIA…NNLS). Residues 14 to 21 (GKPNVGKS), 61 to 65 (DTGGI), 123 to 126 (NKLD), 182 to 189 (GKPNAGKS), 229 to 233 (DTAGI), and 294 to 297 (NKWD) each bind GTP. The region spanning 352–435 (REIKQNLLND…PINLVLKKNK (84 aa)) is the KH-like domain.

The protein belongs to the TRAFAC class TrmE-Era-EngA-EngB-Septin-like GTPase superfamily. EngA (Der) GTPase family. As to quaternary structure, associates with the 50S ribosomal subunit.

Functionally, GTPase that plays an essential role in the late steps of ribosome biogenesis. This chain is GTPase Der, found in Mycoplasmopsis pulmonis (strain UAB CTIP) (Mycoplasma pulmonis).